Reading from the N-terminus, the 223-residue chain is Probable transaldolase (223 aa).

The active-site Schiff-base intermediate with substrate is the Lys91.

Belongs to the transaldolase family. Type 3B subfamily.

It is found in the cytoplasm. The enzyme catalyses D-sedoheptulose 7-phosphate + D-glyceraldehyde 3-phosphate = D-erythrose 4-phosphate + beta-D-fructose 6-phosphate. Its pathway is carbohydrate degradation; pentose phosphate pathway; D-glyceraldehyde 3-phosphate and beta-D-fructose 6-phosphate from D-ribose 5-phosphate and D-xylulose 5-phosphate (non-oxidative stage): step 2/3. Transaldolase is important for the balance of metabolites in the pentose-phosphate pathway. The polypeptide is Probable transaldolase (Chlorobium phaeobacteroides (strain BS1)).